Here is a 504-residue protein sequence, read N- to C-terminus: Maturase K (504 aa).

Belongs to the intron maturase 2 family. MatK subfamily.

It is found in the plastid. Its subcellular location is the chloroplast. Functionally, usually encoded in the trnK tRNA gene intron. Probably assists in splicing its own and other chloroplast group II introns. The protein is Maturase K of Gossypium barbadense (Sea Island cotton).